We begin with the raw amino-acid sequence, 442 residues long: Histidinol dehydrogenase (442 aa).

NAD(+)-binding residues include Tyr138, Gln196, and Asn219. Substrate contacts are provided by Ser245, Gln267, and His270. The Zn(2+) site is built by Gln267 and His270. Active-site proton acceptor residues include Glu334 and His335. Residues His335, Asp368, Glu422, and His427 each coordinate substrate. Asp368 contributes to the Zn(2+) binding site. Residue His427 coordinates Zn(2+).

Belongs to the histidinol dehydrogenase family. Homodimer. It depends on Zn(2+) as a cofactor.

It catalyses the reaction L-histidinol + 2 NAD(+) + H2O = L-histidine + 2 NADH + 3 H(+). Its pathway is amino-acid biosynthesis; L-histidine biosynthesis; L-histidine from 5-phospho-alpha-D-ribose 1-diphosphate: step 9/9. Functionally, catalyzes the sequential NAD-dependent oxidations of L-histidinol to L-histidinaldehyde and then to L-histidine. This Pectobacterium atrosepticum (strain SCRI 1043 / ATCC BAA-672) (Erwinia carotovora subsp. atroseptica) protein is Histidinol dehydrogenase.